The sequence spans 585 residues: Dihydroxy-acid dehydratase, mitochondrial (585 aa).

The N-terminal 20 residues, 1–20 (MGLLTKVATSRQFSTTRCVA), are a transit peptide targeting the mitochondrion. Cys-70 contacts [2Fe-2S] cluster. Asp-102 is a binding site for Mg(2+). A [2Fe-2S] cluster-binding site is contributed by Cys-143. Asp-144 provides a ligand contact to Mg(2+). Position 221 (Cys-221) interacts with [2Fe-2S] cluster. Glu-474 contributes to the Mg(2+) binding site. The active-site Proton acceptor is the Ser-500.

This sequence belongs to the IlvD/Edd family. The cofactor is [2Fe-2S] cluster. It depends on Mg(2+) as a cofactor.

The protein resides in the mitochondrion. It carries out the reaction (2R)-2,3-dihydroxy-3-methylbutanoate = 3-methyl-2-oxobutanoate + H2O. The enzyme catalyses (2R,3R)-2,3-dihydroxy-3-methylpentanoate = (S)-3-methyl-2-oxopentanoate + H2O. It functions in the pathway amino-acid biosynthesis; L-isoleucine biosynthesis; L-isoleucine from 2-oxobutanoate: step 3/4. It participates in amino-acid biosynthesis; L-valine biosynthesis; L-valine from pyruvate: step 3/4. Its activity is regulated as follows. Catalytic activity is inactivated under iron-limiting conditions. In terms of biological role, dihydroxyacid dehydratase that catalyzes the third step in the common pathway leading to biosynthesis of branched-chain amino acids. Catalyzes the dehydration of (2R,3R)-2,3-dihydroxy-3-methylpentanoate (2,3-dihydroxy-3-methylvalerate) into 2-oxo-3-methylpentanoate (2-oxo-3-methylvalerate) and of (2R)-2,3-dihydroxy-3-methylbutanoate (2,3-dihydroxyisovalerate) into 2-oxo-3-methylbutanoate (2-oxoisovalerate), the penultimate precursor to L-isoleucine and L-valine, respectively. Required for the synthesis of alpha-isopropylmalate which modulates the activity of LEU3 and subsequently regulates the expression of LEU1. In Saccharomyces cerevisiae (strain ATCC 204508 / S288c) (Baker's yeast), this protein is Dihydroxy-acid dehydratase, mitochondrial.